The primary structure comprises 384 residues: Urotensin-2 receptor (384 aa).

Over 1 to 54 (MALSPEPSSRFLVPATMGSAMPELPGAPNASLNSSLASPTEPNSLEDLVATGTI) the chain is Extracellular. Asparagine 29 and asparagine 33 each carry an N-linked (GlcNAc...) asparagine glycan. A helical membrane pass occupies residues 55–77 (GVVLSAMGVVGMAGNVYTLTVMC). Residues 78–87 (RFLHTSASMY) are Cytoplasmic-facing. Residues 88–113 (VYVINLALADLLYLLSIPFIVATYVT) form a helical membrane-spanning segment. Over 114-124 (KRWHFGDVGCR) the chain is Extracellular. The cysteines at positions 123 and 199 are disulfide-linked. A helical transmembrane segment spans residues 125-146 (VLFSLDFLTMHASIFTLTLMSR). The Cytoplasmic segment spans residues 147-167 (ERYAAVVRPLDTVQRSKGYRK). A helical membrane pass occupies residues 168–186 (VLALGTWLLALLLALPMML). The Extracellular segment spans residues 187-209 (AIRLVRRGHKSLCLPAWGQRTHR). A helical transmembrane segment spans residues 210-232 (AYLTLLFGTSIVGPGVVIGLLYV). At 233-259 (RLARAYWLSQRSSFTQTRRLPNPRVLY) the chain is on the cytoplasmic side. Residues 260–285 (LILGIVLLFWACFLPFWLWQLLAQYR) form a helical membrane-spanning segment. Over 286–299 (GAPPLAPRSARIVN) the chain is Extracellular. Residues 300 to 320 (YLTTCLTYGNSCVNPFLYTLL) form a helical membrane-spanning segment. At 321–384 (TKNYRDYRQR…SQAVPGSLCV (64 aa)) the chain is on the cytoplasmic side.

This sequence belongs to the G-protein coupled receptor 1 family. As to expression, expressed in neural tissue, including sensory epithelia.

It is found in the cell membrane. In terms of biological role, high affinity receptor for urotensin-2 and urotensin-2B. The activity of this receptor is mediated by a G-protein that activate a phosphatidylinositol-calcium second messenger system. This Bos taurus (Bovine) protein is Urotensin-2 receptor (UTS2R).